We begin with the raw amino-acid sequence, 314 residues long: Porphobilinogen deaminase (314 aa).

Cysteine 249 is modified (S-(dipyrrolylmethanemethyl)cysteine).

This sequence belongs to the HMBS family. In terms of assembly, monomer. The cofactor is dipyrromethane.

The enzyme catalyses 4 porphobilinogen + H2O = hydroxymethylbilane + 4 NH4(+). It participates in porphyrin-containing compound metabolism; protoporphyrin-IX biosynthesis; coproporphyrinogen-III from 5-aminolevulinate: step 2/4. In terms of biological role, tetrapolymerization of the monopyrrole PBG into the hydroxymethylbilane pre-uroporphyrinogen in several discrete steps. The chain is Porphobilinogen deaminase from Brucella suis biovar 1 (strain 1330).